Here is a 295-residue protein sequence, read N- to C-terminus: Nucleotide-binding protein llmg_1557 (295 aa).

12-19 (GMSGAGKT) is an ATP binding site. GTP is bound at residue 63 to 66 (DMRS).

It belongs to the RapZ-like family.

Functionally, displays ATPase and GTPase activities. The sequence is that of Nucleotide-binding protein llmg_1557 from Lactococcus lactis subsp. cremoris (strain MG1363).